Consider the following 242-residue polypeptide: Protein unc-119 homolog B-A (242 aa).

Over residues 1-20 the composition is skewed to basic and acidic residues; that stretch reads MSGSKREAALTGQPKDERKK. The disordered stretch occupies residues 1–49; that stretch reads MSGSKREAALTGQPKDERKKSGGGVINRLKARRVQGKESGTSDQSSVTP. Polar residues predominate over residues 38-48; it reads ESGTSDQSSVT. Tyr133 contributes to the tetradecanoate binding site.

Belongs to the PDE6D/unc-119 family.

Functionally, myristoyl-binding protein that acts as a cargo adapter: specifically binds the myristoyl moiety of a subset of N-terminally myristoylated proteins and is required for their localization. Plays a key role in localization of proteins to the primary cilium membrane. The sequence is that of Protein unc-119 homolog B-A (unc119b-a) from Xenopus laevis (African clawed frog).